We begin with the raw amino-acid sequence, 1201 residues long: Potassium/sodium hyperpolarization-activated cyclic nucleotide-gated channel 4 (1201 aa).

The Cytoplasmic portion of the chain corresponds to Met-1 to Phe-263. Positions Trp-24–Ser-183 are disordered. Acidic residues predominate over residues Met-26–Gly-36. Residues Ser-105–Ser-118 are compositionally biased toward gly residues. Residues His-121 to Ile-132 are compositionally biased toward basic and acidic residues. Ser-139 is subject to Phosphoserine. Over residues Ala-164–Pro-174 the composition is skewed to pro residues. Residues Gly-209–Asp-260 are involved in subunit assembly. Residues Tyr-264 to Phe-286 traverse the membrane as a helical segment. At Phe-287 to Thr-293 the chain is on the extracellular side. Residues Pro-294–Phe-314 form a helical membrane-spanning segment. Over Arg-315–Lys-336 the chain is Cytoplasmic. Residues Tyr-337 to Val-359 form a helical membrane-spanning segment. The Extracellular segment spans residues Glu-360 to Arg-378. Residues Phe-379–His-399 form a helical; Voltage-sensor membrane-spanning segment. The Cytoplasmic segment spans residues Gln-400–Ser-413. Residues Ala-414–Gln-436 form a helical membrane-spanning segment. The Extracellular segment spans residues Phe-437–Gln-464. A glycan (N-linked (GlcNAc...) asparagine) is linked at Asn-458. An intramembrane region (pore-forming) is located at residues Tyr-465–Pro-486. The Extracellular segment spans residues Val-487–Asp-491. A helical transmembrane segment spans residues Val-492 to Ile-517. At Gln-518–Leu-1201 the chain is on the cytoplasmic side. Positions 559, 562, 564, and 566 each coordinate 3',5'-cyclic GMP. Residues Gly-659, Glu-660, Cys-662, Arg-669, Thr-670, Val-673, and Arg-710 each contribute to the 3',5'-cyclic AMP site. Disordered stretches follow at residues Ala-804–Ala-902 and Ala-914–Leu-1201. 2 stretches are compositionally biased toward low complexity: residues Ser-831–Ser-856 and Ser-866–Ser-880. The span at Ser-881–Thr-894 shows a compositional bias: pro residues. Low complexity-rich tracts occupy residues Leu-915–Ala-939 and Arg-967–Pro-995. Pro residues predominate over residues Gly-1029–Pro-1042. Residues Ala-1045–Pro-1056 are compositionally biased toward low complexity. A phosphoserine mark is found at Ser-1105 and Ser-1108. The segment covering Ala-1122–Pro-1134 has biased composition (gly residues).

The protein belongs to the potassium channel HCN family. Homotetramer. The potassium channel is composed of a homo- or heterotetrameric complex of pore-forming subunits. Interacts with PEX5L with a 4:4 HCN4:PEX5L stoichiometry; reduces the effects of cAMP on the voltage-dependence and rate of activation. Interacts with IRAG1; regulates HCN4 channel activity. Interacts with IRAG2; regulates HCN4 channel activity. In terms of processing, S-palmitoylated. As to expression, detected in a subset of elongated cells in taste buds.

It localises to the cell membrane. It catalyses the reaction K(+)(in) = K(+)(out). The catalysed reaction is Na(+)(in) = Na(+)(out). With respect to regulation, activated by cAMP, and to a lesser extent by cGMP and cCMP. cAMP binding causes a conformation change that leads to the assembly of an active tetramer and channel opening. Binding of cAMP removes a tonic inhibition conferred by cyclic nucleotide-binding domain (CNBD) on channel opening. Cyclic dinucleotides can modulate HCN4 channel; cyclic dinucleotides acting as potent antagonists of cAMP. Inhibited by extracellular Cs(+) ions. Auxiliary subunits can also regulate HCN4 channel. IRAG1 causes a gain-of-function by shifting HCN4 activation to more depolarized membrane potentials in the absence of cAMP. In contrast, IRAG2 causes a loss-of-function by inhibiting cAMP-dependent potentiation of HCN4 activation. Its function is as follows. Hyperpolarization-activated ion channel that are permeable to Na(+) and K(+) ions with very slow activation and inactivation. Exhibits higher selectivity for K(+) over Na(+) ions. Contributes to the native pacemaker currents in heart (If) that regulate the rhythm of heart beat. Contributes to the native pacemaker currents in neurons (Ih). May mediate responses to sour stimuli. The chain is Potassium/sodium hyperpolarization-activated cyclic nucleotide-gated channel 4 (Hcn4) from Mus musculus (Mouse).